Consider the following 270-residue polypeptide: MIEGLKVKALICVVEIIENGINSIHAMGILLFALNILKKASVLVSRILCAWNGKLSSEYPRDPRSRLGIFKNMNIAFICDGNRRYARKLGLEDSFIKDKGLQKIYEFIEFGCFYGIKEISFFCFALSNFKRSPEEVNKLMGLVKQKIERPKEIGIRPKFRVYGRLDLLEEDVRKRLMDIEEESKNNTSIIVNIFFAYSAEDEITRGIQFNSHVDILIRTSNTKRLSNFMIRQVAKGTSVFFAKALWPELTTAHLFLILLKHRLENKYLLG.

The protein belongs to the UPP synthase family.

It is found in the endoplasmic reticulum membrane. It participates in protein modification; protein glycosylation. Cis-prenyl transferase that adds multiple copies of isopentenyl pyrophosphate (IPP) to farnesyl pyrophosphate (FPP) to produce dehydrodolichyl diphosphate (Dedol-PP). The protein is Dehydrodolichyl diphosphate synthase (RER2) of Encephalitozoon cuniculi (strain GB-M1) (Microsporidian parasite).